A 290-amino-acid chain; its full sequence is Elongation factor Ts (290 aa).

Residues 82-85 (TDFV) are involved in Mg(2+) ion dislocation from EF-Tu.

Belongs to the EF-Ts family.

Its subcellular location is the cytoplasm. Its function is as follows. Associates with the EF-Tu.GDP complex and induces the exchange of GDP to GTP. It remains bound to the aminoacyl-tRNA.EF-Tu.GTP complex up to the GTP hydrolysis stage on the ribosome. This is Elongation factor Ts from Thiobacillus denitrificans (strain ATCC 25259 / T1).